The primary structure comprises 115 residues: uncharacterized protein (115 aa).

Residues methionine 1 to glutamine 74 form a disordered region.

This is an uncharacterized protein from Homo sapiens (Human).